The chain runs to 393 residues: Lipid-A-disaccharide synthase (393 aa).

It belongs to the LpxB family.

It carries out the reaction a lipid X + a UDP-2-N,3-O-bis[(3R)-3-hydroxyacyl]-alpha-D-glucosamine = a lipid A disaccharide + UDP + H(+). Its pathway is bacterial outer membrane biogenesis; LPS lipid A biosynthesis. In terms of biological role, condensation of UDP-2,3-diacylglucosamine and 2,3-diacylglucosamine-1-phosphate to form lipid A disaccharide, a precursor of lipid A, a phosphorylated glycolipid that anchors the lipopolysaccharide to the outer membrane of the cell. This chain is Lipid-A-disaccharide synthase, found in Granulibacter bethesdensis (strain ATCC BAA-1260 / CGDNIH1).